The primary structure comprises 266 residues: Pyrrolizixenacetamide deacetylase (266 aa).

Position 28 (Thr28) interacts with acetate. The active-site Nucleophile is Ser94. Leu95 lines the acetate pocket. Residues Asp215 and His242 each act as charge relay system in the active site. Residue His242 participates in acetate binding.

It belongs to the AB hydrolase superfamily. As to quaternary structure, homodimer.

It carries out the reaction pyrrolizixenacetamide + H2O = 3-amino-5,6,7,7a-tetrahydro-1H-pyrrolizin-1-one + acetate + H(+). In terms of biological role, involved in the biosynthetic pathway of pyrrolizwilline, a pyrrolizidine alkaloid. Catalyzes the N-deacetylation of pyrrolizixenacetamide. The protein is Pyrrolizixenacetamide deacetylase of Xenorhabdus hominickii.